A 251-amino-acid chain; its full sequence is Aliphatic sulfonates import ATP-binding protein SsuB (251 aa).

Positions 3–231 (VSINEVSKYF…PRNKTSQSFQ (229 aa)) constitute an ABC transporter domain. An ATP-binding site is contributed by 39–46 (GPSGCGKS).

The protein belongs to the ABC transporter superfamily. Aliphatic sulfonates importer (TC 3.A.1.17.2) family. In terms of assembly, the complex is composed of two ATP-binding proteins (SsuB), two transmembrane proteins (SsuC) and a solute-binding protein (SsuA).

Its subcellular location is the cell membrane. It catalyses the reaction ATP + H2O + aliphatic sulfonate-[sulfonate-binding protein]Side 1 = ADP + phosphate + aliphatic sulfonateSide 2 + [sulfonate-binding protein]Side 1.. In terms of biological role, part of the ABC transporter complex SsuABC involved in aliphatic sulfonates import. Responsible for energy coupling to the transport system. In Bacillus anthracis, this protein is Aliphatic sulfonates import ATP-binding protein SsuB.